The primary structure comprises 480 residues: CASP8 and FADD-like apoptosis regulator (480 aa).

DED domains lie at 1–73 (MSAE…RILK) and 92–170 (DYRV…KIQK). The segment at 1 to 195 (MSAEVIHQVE…LQAAIQKSLK (195 aa)) is interaction with CASP8. Residues 1-227 (MSAEVIHQVE…GAQQEPVKKS (227 aa)) form an interaction with FADD region. The interaction with CASP8 propeptide stretch occupies residues 1 to 305 (MSAEVIHQVE…FACMPEHRDY (305 aa)). Positions 1–435 (MSAEVIHQVE…CLSQKLRQER (435 aa)) are not proteolytically processed and involved in apoptosis inhibition. Residues 192 to 435 (KSLKDPSNNF…CLSQKLRQER (244 aa)) are interaction with CASP3. An interaction with TRAF1 and TRAF2 region spans residues 192–480 (KSLKDPSNNF…LRKKLILSYT (289 aa)). The segment at 217–480 (LGAQQEPVKK…LRKKLILSYT (264 aa)) is interaction with CASP8 subunits p18 and p10. The tract at residues 263 to 358 (ETELLRDTFT…AGKPKMFFIQ (96 aa)) is caspase. Positions 370-480 (SSLLEVDGPA…LRKKLILSYT (111 aa)) are interaction with CASP8.

Belongs to the peptidase C14A family. In terms of assembly, TNFRSF6 stimulation triggers recruitment to the death-inducing signaling complex (DISC) formed by TNFRSF6, FADD and CASP8. A proteolytic fragment (p43) stays associated with the DISC. Also interacts with FADD, CASP8, CASP3, TRAF1, TRAF2 and Bcl-X(L) (in vitro). Interacts with RIPK1. As to quaternary structure, (Microbial infection) Interacts with HBV protein X. Proteolytically processed by CASP8 generating subunit p43 and p12. Widely expressed. Higher expression in skeletal muscle, pancreas, heart, kidney, placenta, and peripheral blood leukocytes. Also detected in diverse cell lines. Isoform 8 is predominantly expressed in testis and skeletal muscle.

In terms of biological role, apoptosis regulator protein which may function as a crucial link between cell survival and cell death pathways in mammalian cells. Acts as an inhibitor of TNFRSF6 mediated apoptosis. A proteolytic fragment (p43) is likely retained in the death-inducing signaling complex (DISC) thereby blocking further recruitment and processing of caspase-8 at the complex. Full length and shorter isoforms have been shown either to induce apoptosis or to reduce TNFRSF-triggered apoptosis. Lacks enzymatic (caspase) activity. The chain is CASP8 and FADD-like apoptosis regulator (CFLAR) from Homo sapiens (Human).